Reading from the N-terminus, the 107-residue chain is Large ribosomal subunit protein uL24 (107 aa).

It belongs to the universal ribosomal protein uL24 family. In terms of assembly, part of the 50S ribosomal subunit.

Its function is as follows. One of two assembly initiator proteins, it binds directly to the 5'-end of the 23S rRNA, where it nucleates assembly of the 50S subunit. In terms of biological role, one of the proteins that surrounds the polypeptide exit tunnel on the outside of the subunit. This chain is Large ribosomal subunit protein uL24, found in Streptomyces griseus subsp. griseus (strain JCM 4626 / CBS 651.72 / NBRC 13350 / KCC S-0626 / ISP 5235).